The chain runs to 417 residues: RH-like protein (417 aa).

A run of 11 helical transmembrane segments spans residues 12–32, 44–64, 77–97, 125–145, 172–192, 203–223, 238–258, 265–285, 287–307, 331–351, and 358–378; these read CLPL…FFFT, LVAS…GLGF, VAFN…LDGF, ISMN…MELV, IHVF…KPLP, TSPS…WPTF, VFST…VSSL, INMT…SASC, VIHS…ISIG, TFGL…ALRV, and MIGF…AMSI.

Belongs to the ammonium transporter (TC 2.A.49) family. Rh subfamily.

The protein localises to the membrane. Its function is as follows. May be part of an oligomeric complex which is likely to have a transport or channel function in the erythrocyte membrane. The chain is RH-like protein from Macaca mulatta (Rhesus macaque).